Reading from the N-terminus, the 406-residue chain is uncharacterized protein (406 aa).

10 helical membrane-spanning segments follow: residues 7-27 (SILF…MVVI), 43-63 (VTLI…LITI), 69-89 (LTII…FYAL), 98-118 (LILV…FSPL), 155-175 (GLII…FLLF), 220-240 (IIIM…SVSL), 253-273 (WWGF…FIIY), 297-317 (LTLI…VLFM), 352-372 (VQFI…FLGV), and 374-394 (LVYV…FSQL).

The protein belongs to the major facilitator superfamily.

Its subcellular location is the cell membrane. This is an uncharacterized protein from Bacillus subtilis (strain 168).